We begin with the raw amino-acid sequence, 110 residues long: UPF0251 protein PH0803 (110 aa).

Belongs to the UPF0251 family.

This is UPF0251 protein PH0803 from Pyrococcus horikoshii (strain ATCC 700860 / DSM 12428 / JCM 9974 / NBRC 100139 / OT-3).